A 401-amino-acid chain; its full sequence is Probable tRNA sulfurtransferase (401 aa).

Positions 63 to 168 constitute a THUMP domain; it reads TTAEQALSYL…EREAFLYGAR (106 aa). ATP-binding positions include 186–187, 211–212, arginine 268, glycine 290, and glutamine 299; these read LL and YF.

The protein belongs to the ThiI family.

It localises to the cytoplasm. It carries out the reaction [ThiI sulfur-carrier protein]-S-sulfanyl-L-cysteine + a uridine in tRNA + 2 reduced [2Fe-2S]-[ferredoxin] + ATP + H(+) = [ThiI sulfur-carrier protein]-L-cysteine + a 4-thiouridine in tRNA + 2 oxidized [2Fe-2S]-[ferredoxin] + AMP + diphosphate. It catalyses the reaction [ThiS sulfur-carrier protein]-C-terminal Gly-Gly-AMP + S-sulfanyl-L-cysteinyl-[cysteine desulfurase] + AH2 = [ThiS sulfur-carrier protein]-C-terminal-Gly-aminoethanethioate + L-cysteinyl-[cysteine desulfurase] + A + AMP + 2 H(+). It participates in cofactor biosynthesis; thiamine diphosphate biosynthesis. Its function is as follows. Catalyzes the ATP-dependent transfer of a sulfur to tRNA to produce 4-thiouridine in position 8 of tRNAs, which functions as a near-UV photosensor. Also catalyzes the transfer of sulfur to the sulfur carrier protein ThiS, forming ThiS-thiocarboxylate. This is a step in the synthesis of thiazole, in the thiamine biosynthesis pathway. The sulfur is donated as persulfide by IscS. The protein is Probable tRNA sulfurtransferase of Treponema pallidum (strain Nichols).